The sequence spans 474 residues: Trehalose-6-phosphate synthase (474 aa).

Residue arginine 10 participates in D-glucose 6-phosphate binding. Glycine 22–glycine 23 serves as a coordination point for UDP-alpha-D-glucose. D-glucose 6-phosphate-binding residues include tyrosine 77 and aspartate 131. 2 residues coordinate UDP-alpha-D-glucose: arginine 263 and lysine 268. Arginine 301 contacts D-glucose 6-phosphate. UDP-alpha-D-glucose-binding positions include phenylalanine 340 and leucine 366 to glutamate 370.

Belongs to the glycosyltransferase 20 family. In terms of assembly, homotetramer.

The catalysed reaction is D-glucose 6-phosphate + UDP-alpha-D-glucose = alpha,alpha-trehalose 6-phosphate + UDP + H(+). It participates in glycan biosynthesis; trehalose biosynthesis. Its function is as follows. Probably involved in the osmoprotection via the biosynthesis of trehalose. Catalyzes the transfer of glucose from UDP-alpha-D-glucose (UDP-Glc) to D-glucose 6-phosphate (Glc-6-P) to form trehalose-6-phosphate. Acts with retention of the anomeric configuration of the UDP-sugar donor. The protein is Trehalose-6-phosphate synthase of Escherichia coli O6:K15:H31 (strain 536 / UPEC).